Consider the following 207-residue polypeptide: uncharacterized protein (207 aa).

Residues 177-197 (LILAIGFIIGILLPTFFILLG) traverse the membrane as a helical segment.

It is found in the membrane. This is an uncharacterized protein from Haemophilus influenzae (strain ATCC 51907 / DSM 11121 / KW20 / Rd).